The sequence spans 209 residues: Uracil phosphoribosyltransferase (209 aa).

5-phospho-alpha-D-ribose 1-diphosphate is bound by residues Arg79, Arg104, and Asp131–Ser139. Uracil-binding positions include Ile194 and Gly199–Ala201. Asp200 serves as a coordination point for 5-phospho-alpha-D-ribose 1-diphosphate.

Belongs to the UPRTase family. Mg(2+) serves as cofactor.

The enzyme catalyses UMP + diphosphate = 5-phospho-alpha-D-ribose 1-diphosphate + uracil. It functions in the pathway pyrimidine metabolism; UMP biosynthesis via salvage pathway; UMP from uracil: step 1/1. Allosterically activated by GTP. In terms of biological role, catalyzes the conversion of uracil and 5-phospho-alpha-D-ribose 1-diphosphate (PRPP) to UMP and diphosphate. The protein is Uracil phosphoribosyltransferase of Lactobacillus gasseri (strain ATCC 33323 / DSM 20243 / BCRC 14619 / CIP 102991 / JCM 1131 / KCTC 3163 / NCIMB 11718 / NCTC 13722 / AM63).